Reading from the N-terminus, the 322-residue chain is Aldo-keto reductase family 1 member C23 (322 aa).

Position 20-24 (20-24 (GFGTY)) interacts with NADP(+). Lysine 31 provides a ligand contact to substrate. Aspartate 50 contributes to the NADP(+) binding site. Tyrosine 55 (proton donor) is an active-site residue. Histidine 117 serves as a coordination point for substrate. NADP(+)-binding positions include 166–167 (SN), glutamine 190, 216–221 (YSALGS), and 269–279 (KSYNEKRIKEN).

The protein belongs to the aldo/keto reductase family. Monomer. In terms of tissue distribution, detected in follicle granulosa cells (at protein level). Detected in heart, lung, liver, kidney, stomach, uterus, testis, skeletal muscle and granulosa cells of the follicle wall.

It localises to the cytoplasm. NADP-dependent oxidoreductase that has 20-alpha-hydroxysteroid dehydrogenase activity. The sequence is that of Aldo-keto reductase family 1 member C23 (AKR1C23) from Equus caballus (Horse).